The primary structure comprises 899 residues: Receptor-like protein kinase At3g21340 (899 aa).

The signal sequence occupies residues 1–27; the sequence is MEYHPQAIRLCALIFISFYALLHLVEA. The Extracellular segment spans residues 28–522; that stretch reads QDQKGFISLD…GAKKMNVVIP (495 aa). N-linked (GlcNAc...) asparagine glycans are attached at residues N100, N146, N185, N240, N266, N420, N436, N449, N468, and N475. LRR repeat units follow at residues 415–438, 439–461, and 463–485; these read IVTS…QNLT, HLQE…LADI, and SLLV…LLQK. A helical transmembrane segment spans residues 523-543; the sequence is IVASVAFVVVLGSALAFFFIF. The Cytoplasmic segment spans residues 544–899; the sequence is KKKKTSNSQD…FDIGATPDAR (356 aa). At T583 the chain carries Phosphothreonine. In terms of domain architecture, Protein kinase spans 592–865; that stretch reads NNFERVLGKG…QVVIELNECL (274 aa). ATP-binding positions include 598–606 and K620; that span reads LGKGGFGMV. Y665 carries the post-translational modification Phosphotyrosine. The Proton acceptor role is filled by D717. S751 is modified (phosphoserine). 2 positions are modified to phosphothreonine: T752 and T757. A Phosphotyrosine modification is found at Y765.

Belongs to the protein kinase superfamily. Ser/Thr protein kinase family. Autophosphorylated on Tyr and Thr residues.

Its subcellular location is the cell membrane. It catalyses the reaction L-seryl-[protein] + ATP = O-phospho-L-seryl-[protein] + ADP + H(+). The enzyme catalyses L-threonyl-[protein] + ATP = O-phospho-L-threonyl-[protein] + ADP + H(+). It carries out the reaction L-tyrosyl-[protein] + ATP = O-phospho-L-tyrosyl-[protein] + ADP + H(+). Its function is as follows. Probable receptor with a dual specificity kinase activity acting on both serine/threonine- and tyrosine-containing substrates. This Arabidopsis thaliana (Mouse-ear cress) protein is Receptor-like protein kinase At3g21340.